Here is a 505-residue protein sequence, read N- to C-terminus: Flagellin (505 aa).

Belongs to the bacterial flagellin family.

The protein localises to the secreted. Its subcellular location is the bacterial flagellum. Flagellin is the subunit protein which polymerizes to form the filaments of bacterial flagella. The polypeptide is Flagellin (fliC) (Salmonella senftenberg).